A 163-amino-acid chain; its full sequence is Transcription elongation factor GreA (163 aa).

Positions 49–80 (ENAEYDAARDRQSEVERRILELERILENAEII) form a coiled coil.

It belongs to the GreA/GreB family.

Necessary for efficient RNA polymerase transcription elongation past template-encoded arresting sites. The arresting sites in DNA have the property of trapping a certain fraction of elongating RNA polymerases that pass through, resulting in locked ternary complexes. Cleavage of the nascent transcript by cleavage factors such as GreA or GreB allows the resumption of elongation from the new 3'terminus. GreA releases sequences of 2 to 3 nucleotides. The chain is Transcription elongation factor GreA from Mycoplasmopsis agalactiae (strain NCTC 10123 / CIP 59.7 / PG2) (Mycoplasma agalactiae).